The following is a 277-amino-acid chain: Sulfur carrier protein FdhD (277 aa).

Residue cysteine 121 is the Cysteine persulfide intermediate of the active site. Residue 260–265 participates in Mo-bis(molybdopterin guanine dinucleotide) binding; the sequence is FCKPGR.

This sequence belongs to the FdhD family.

The protein localises to the cytoplasm. Its function is as follows. Required for formate dehydrogenase (FDH) activity. Acts as a sulfur carrier protein that transfers sulfur from IscS to the molybdenum cofactor prior to its insertion into FDH. This is Sulfur carrier protein FdhD from Escherichia coli O81 (strain ED1a).